The following is a 231-amino-acid chain: Transmembrane gamma-carboxyglutamic acid protein 3 (231 aa).

A propeptide spanning residues 1–19 (MAVFLEAKDAHSVLKRFPR) is cleaved from the precursor. Positions 20 to 65 (ANEFLEELRQGTIERECMEEICSYEEVKEVFENKEKTMEFWKGYPN) constitute a Gla domain. The Extracellular portion of the chain corresponds to 20–78 (ANEFLEELRQGTIERECMEEICSYEEVKEVFENKEKTMEFWKGYPNAVYSVRDPSQSSD). 4-carboxyglutamate occurs at positions 22, 25, 26, 33, 35, 38, 39, 44, 45, 48, 51, 54, and 58. An intrachain disulfide couples Cys-36 to Cys-41. A helical membrane pass occupies residues 79 to 101 (AMYVVVPLLGVALLIVIALFIIW). At 102 to 231 (RCQLQKATRH…IVAANPGADK (130 aa)) the chain is on the cytoplasmic side. Disordered stretches follow at residues 140 to 165 (HSQG…SRGG) and 182 to 231 (LSRL…GADK). Residues 202-213 (ESSSEEASVSYS) show a composition bias toward low complexity.

Gla residues are produced after subsequent post-translational modifications of glutamate by a vitamin K-dependent gamma-carboxylase. As to expression, expressed in brain, lung, kidney and heart.

It is found in the membrane. The chain is Transmembrane gamma-carboxyglutamic acid protein 3 (PRRG3) from Homo sapiens (Human).